The primary structure comprises 173 residues: Calcium-binding protein 5 (173 aa).

EF-hand domains lie at 28–63 (DEIE…MGYM), 82–99 (GRVD…KLLA), 105–140 (IGVQ…LLGD), and 142–173 (LTSQ…MMSR). Ca(2+)-binding residues include Asp-41, Asp-43, Asp-45, and Asp-52. Ca(2+)-binding residues include Asp-118, Asn-120, Asp-122, Glu-124, Glu-129, Asp-155, Asn-157, Asp-159, Thr-161, and Glu-166.

In terms of assembly, interacts with CACNA1C (via C-terminal CDB motif) in a calcium-dependent manner. Interacts with STXBP1. Interacts with MYO6. In terms of tissue distribution, expressed in the retina (at protein level).

Its subcellular location is the cytoplasm. Inhibits calcium-dependent inactivation of L-type calcium channel and shifts voltage dependence of activation to more depolarized membrane potentials. Involved in the transmission of light signals. May positively regulate neurotransmitter vesicle endocytosis and exocytosis in a salt-dependent manner. May play a role in the extension and network organization of neurites. The chain is Calcium-binding protein 5 (CABP5) from Bos taurus (Bovine).